The following is a 98-amino-acid chain: Cytochrome c-552 (98 aa).

The first 18 residues, 1–18 (MKKFLLVAVVGLAGITFA), serve as a signal peptide directing secretion. Residues Cys-28, Cys-31, His-32, and Met-77 each contribute to the heme c site.

Belongs to the cytochrome c family. Binds 1 heme c group covalently per subunit.

Its function is as follows. Reacts with hydrogenase. This is Cytochrome c-552 from Hydrogenobacter thermophilus (strain DSM 6534 / IAM 12695 / TK-6).